A 1071-amino-acid chain; its full sequence is Carbamoyl phosphate synthase large chain (1071 aa).

Positions 1–403 (MPKRTDLKSI…SFQKALRGLE (403 aa)) are carboxyphosphate synthetic domain. The region spanning 133–328 (KEAMEKIGLS…IAKVAANWAV (196 aa)) is the ATP-grasp 1 domain. 11 residues coordinate ATP: Arg-169, Gly-175, Gly-176, Gln-208, Val-210, Glu-215, Gly-241, Val-242, His-243, Gln-285, and Glu-299. 3 residues coordinate Mg(2+): Gln-285, Glu-299, and Asn-301. Mn(2+)-binding residues include Gln-285, Glu-299, and Asn-301. Positions 404–548 (TGLCGFNPAR…YSTYEEECES (145 aa)) are oligomerization domain. The tract at residues 549–930 (RPSDRKKVMI…AYYKAQLGAG (382 aa)) is carbamoyl phosphate synthetic domain. An ATP-grasp 2 domain is found at 673–864 (QKVLNDLGLR…LAKVGARCMA (192 aa)). ATP is bound by residues Arg-709, Phe-748, Leu-750, Glu-755, Gly-780, Ile-781, His-782, Ser-783, Gln-823, and Glu-835. Residues Gln-823, Glu-835, and Asn-837 each coordinate Mg(2+). Mn(2+) contacts are provided by Gln-823, Glu-835, and Asn-837. One can recognise an MGS-like domain in the interval 931 to 1071 (ERLNPTGKIF…ELHGRLKNRN (141 aa)). Positions 931-1071 (ERLNPTGKIF…ELHGRLKNRN (141 aa)) are allosteric domain.

Belongs to the CarB family. In terms of assembly, composed of two chains; the small (or glutamine) chain promotes the hydrolysis of glutamine to ammonia, which is used by the large (or ammonia) chain to synthesize carbamoyl phosphate. Tetramer of heterodimers (alpha,beta)4. It depends on Mg(2+) as a cofactor. Mn(2+) is required as a cofactor.

It carries out the reaction hydrogencarbonate + L-glutamine + 2 ATP + H2O = carbamoyl phosphate + L-glutamate + 2 ADP + phosphate + 2 H(+). The enzyme catalyses hydrogencarbonate + NH4(+) + 2 ATP = carbamoyl phosphate + 2 ADP + phosphate + 2 H(+). Its pathway is amino-acid biosynthesis; L-arginine biosynthesis; carbamoyl phosphate from bicarbonate: step 1/1. It participates in pyrimidine metabolism; UMP biosynthesis via de novo pathway; (S)-dihydroorotate from bicarbonate: step 1/3. Large subunit of the glutamine-dependent carbamoyl phosphate synthetase (CPSase). CPSase catalyzes the formation of carbamoyl phosphate from the ammonia moiety of glutamine, carbonate, and phosphate donated by ATP, constituting the first step of 2 biosynthetic pathways, one leading to arginine and/or urea and the other to pyrimidine nucleotides. The large subunit (synthetase) binds the substrates ammonia (free or transferred from glutamine from the small subunit), hydrogencarbonate and ATP and carries out an ATP-coupled ligase reaction, activating hydrogencarbonate by forming carboxy phosphate which reacts with ammonia to form carbamoyl phosphate. This is Carbamoyl phosphate synthase large chain from Neisseria gonorrhoeae.